Consider the following 275-residue polypeptide: Light-independent protochlorophyllide reductase iron-sulfur ATP-binding protein (275 aa).

ATP contacts are provided by residues 12–17 and Lys41; that span reads GIGKST. Residue Ser16 participates in Mg(2+) binding. Residues Cys97 and Cys131 each contribute to the [4Fe-4S] cluster site. An ATP-binding site is contributed by 182-183; that stretch reads NR.

The protein belongs to the NifH/BchL/ChlL family. In terms of assembly, homodimer. Protochlorophyllide reductase is composed of three subunits; BchL, BchN and BchB. The cofactor is [4Fe-4S] cluster.

The catalysed reaction is chlorophyllide a + oxidized 2[4Fe-4S]-[ferredoxin] + 2 ADP + 2 phosphate = protochlorophyllide a + reduced 2[4Fe-4S]-[ferredoxin] + 2 ATP + 2 H2O. The protein operates within porphyrin-containing compound metabolism; bacteriochlorophyll biosynthesis (light-independent). Functionally, component of the dark-operative protochlorophyllide reductase (DPOR) that uses Mg-ATP and reduced ferredoxin to reduce ring D of protochlorophyllide (Pchlide) to form chlorophyllide a (Chlide). This reaction is light-independent. The L component serves as a unique electron donor to the NB-component of the complex, and binds Mg-ATP. In Chlorobium phaeovibrioides (strain DSM 265 / 1930) (Prosthecochloris vibrioformis (strain DSM 265)), this protein is Light-independent protochlorophyllide reductase iron-sulfur ATP-binding protein.